Consider the following 353-residue polypeptide: Holliday junction branch migration complex subunit RuvB (353 aa).

Residues 1–183 (MSGEGLVSAA…FGFTAHMDFY (183 aa)) are large ATPase domain (RuvB-L). Residues leucine 22, arginine 23, glycine 64, lysine 67, threonine 68, serine 69, 130–132 (EDF), arginine 173, tyrosine 183, and arginine 220 each bind ATP. Position 68 (threonine 68) interacts with Mg(2+). The tract at residues 184-254 (DAAELALVLT…VARAALRIYD (71 aa)) is small ATPAse domain (RuvB-S). The tract at residues 257–353 (ALGLDRLDRA…ALFGEDLPAS (97 aa)) is head domain (RuvB-H). Positions 312 and 317 each coordinate DNA.

Belongs to the RuvB family. In terms of assembly, homohexamer. Forms an RuvA(8)-RuvB(12)-Holliday junction (HJ) complex. HJ DNA is sandwiched between 2 RuvA tetramers; dsDNA enters through RuvA and exits via RuvB. An RuvB hexamer assembles on each DNA strand where it exits the tetramer. Each RuvB hexamer is contacted by two RuvA subunits (via domain III) on 2 adjacent RuvB subunits; this complex drives branch migration. In the full resolvosome a probable DNA-RuvA(4)-RuvB(12)-RuvC(2) complex forms which resolves the HJ.

Its subcellular location is the cytoplasm. It carries out the reaction ATP + H2O = ADP + phosphate + H(+). Its function is as follows. The RuvA-RuvB-RuvC complex processes Holliday junction (HJ) DNA during genetic recombination and DNA repair, while the RuvA-RuvB complex plays an important role in the rescue of blocked DNA replication forks via replication fork reversal (RFR). RuvA specifically binds to HJ cruciform DNA, conferring on it an open structure. The RuvB hexamer acts as an ATP-dependent pump, pulling dsDNA into and through the RuvAB complex. RuvB forms 2 homohexamers on either side of HJ DNA bound by 1 or 2 RuvA tetramers; 4 subunits per hexamer contact DNA at a time. Coordinated motions by a converter formed by DNA-disengaged RuvB subunits stimulates ATP hydrolysis and nucleotide exchange. Immobilization of the converter enables RuvB to convert the ATP-contained energy into a lever motion, pulling 2 nucleotides of DNA out of the RuvA tetramer per ATP hydrolyzed, thus driving DNA branch migration. The RuvB motors rotate together with the DNA substrate, which together with the progressing nucleotide cycle form the mechanistic basis for DNA recombination by continuous HJ branch migration. Branch migration allows RuvC to scan DNA until it finds its consensus sequence, where it cleaves and resolves cruciform DNA. In Parafrankia sp. (strain EAN1pec), this protein is Holliday junction branch migration complex subunit RuvB.